Consider the following 452-residue polypeptide: Tubulin alpha-1D chain (452 aa).

The MREC motif motif lies at 1 to 4; sequence MREC. Gln-11 serves as a coordination point for GTP. The residue at position 40 (Lys-40) is an N6-acetyllysine. GTP is bound by residues Glu-71, Ser-140, Gly-144, Thr-145, Thr-179, Asn-206, and Asn-228. Mg(2+) is bound at residue Glu-71. Residue Glu-254 is part of the active site. Tyr-282 carries the 3'-nitrotyrosine modification. Residues 432–452 are disordered; the sequence is YEEVGMDSVEGEGEEEEGDEY. Ser-439 carries the post-translational modification Phosphoserine. 5-glutamyl polyglutamate is present on Glu-446. The residue at position 452 (Tyr-452) is a 3'-nitrotyrosine.

Belongs to the tubulin family. In terms of assembly, dimer of alpha and beta chains. A typical microtubule is a hollow water-filled tube with an outer diameter of 25 nm and an inner diameter of 15 nM. Alpha-beta heterodimers associate head-to-tail to form protofilaments running lengthwise along the microtubule wall with the beta-tubulin subunit facing the microtubule plus end conferring a structural polarity. Microtubules usually have 13 protofilaments but different protofilament numbers can be found in some organisms and specialized cells. Mg(2+) is required as a cofactor. Post-translationally, some glutamate residues at the C-terminus are polyglycylated, resulting in polyglycine chains on the gamma-carboxyl group. Glycylation is mainly limited to tubulin incorporated into axonemes (cilia and flagella) whereas glutamylation is prevalent in neuronal cells, centrioles, axonemes, and the mitotic spindle. Both modifications can coexist on the same protein on adjacent residues, and lowering polyglycylation levels increases polyglutamylation, and reciprocally. Cilia and flagella glycylation is required for their stability and maintenance. Flagella glycylation controls sperm motility. Some glutamate residues at the C-terminus are polyglutamylated, resulting in polyglutamate chains on the gamma-carboxyl group. Polyglutamylation plays a key role in microtubule severing by spastin (SPAST). SPAST preferentially recognizes and acts on microtubules decorated with short polyglutamate tails: severing activity by SPAST increases as the number of glutamates per tubulin rises from one to eight, but decreases beyond this glutamylation threshold. Glutamylation is also involved in cilia motility. In terms of processing, acetylation of alpha chains at Lys-40 is located inside the microtubule lumen. This modification has been correlated with increased microtubule stability, intracellular transport and ciliary assembly. Post-translationally, methylation of alpha chains at Lys-40 is found in mitotic microtubules and is required for normal mitosis and cytokinesis contributing to genomic stability. Nitration of Tyr-452 is irreversible and interferes with normal dynein intracellular distribution. In terms of processing, undergoes a tyrosination/detyrosination cycle, the cyclic removal and re-addition of a C-terminal tyrosine residue by the enzymes tubulin tyrosine carboxypeptidase (MATCAP, VASH1 or VASH2) and tubulin tyrosine ligase (TTL), respectively. Post-translationally, tyrosination promotes microtubule interaction with CAP-Gly domain-containing proteins such as CLIP1, CLIP2 and DCTN1. Tyrosination regulates the initiation of dynein-dynactin motility via interaction with DCTN1, which brings the dynein-dynactin complex into contact with microtubules. In neurons, tyrosinated tubulins mediate the initiation of retrograde vesicle transport. Detyrosination is involved in metaphase plate congression by guiding chromosomes during mitosis: detyrosination promotes interaction with CENPE, promoting pole-proximal transport of chromosomes toward the equator. Detyrosination increases microtubules-dependent mechanotransduction in dystrophic cardiac and skeletal muscle. In cardiomyocytes, detyrosinated microtubules are required to resist to contractile compression during contraction: detyrosination promotes association with desmin (DES) at force-generating sarcomeres, leading to buckled microtubules and mechanical resistance to contraction.

The protein resides in the cytoplasm. It localises to the cytoskeleton. The catalysed reaction is GTP + H2O = GDP + phosphate + H(+). In terms of biological role, tubulin is the major constituent of microtubules, a cylinder consisting of laterally associated linear protofilaments composed of alpha- and beta-tubulin heterodimers. Microtubules grow by the addition of GTP-tubulin dimers to the microtubule end, where a stabilizing cap forms. Below the cap, tubulin dimers are in GDP-bound state, owing to GTPase activity of alpha-tubulin. This chain is Tubulin alpha-1D chain (TUBA1D), found in Bos taurus (Bovine).